Consider the following 286-residue polypeptide: Glycine--tRNA ligase alpha subunit (286 aa).

It belongs to the class-II aminoacyl-tRNA synthetase family. As to quaternary structure, tetramer of two alpha and two beta subunits.

The protein resides in the cytoplasm. It carries out the reaction tRNA(Gly) + glycine + ATP = glycyl-tRNA(Gly) + AMP + diphosphate. In Thermotoga sp. (strain RQ2), this protein is Glycine--tRNA ligase alpha subunit.